A 179-amino-acid polypeptide reads, in one-letter code: Large ribosomal subunit protein uL6 (179 aa).

This sequence belongs to the universal ribosomal protein uL6 family. Part of the 50S ribosomal subunit.

In terms of biological role, this protein binds to the 23S rRNA, and is important in its secondary structure. It is located near the subunit interface in the base of the L7/L12 stalk, and near the tRNA binding site of the peptidyltransferase center. This is Large ribosomal subunit protein uL6 from Mycobacteroides abscessus (strain ATCC 19977 / DSM 44196 / CCUG 20993 / CIP 104536 / JCM 13569 / NCTC 13031 / TMC 1543 / L948) (Mycobacterium abscessus).